The primary structure comprises 408 residues: LL-diaminopimelate aminotransferase (408 aa).

Substrate-binding residues include Tyr-15 and Gly-42. Pyridoxal 5'-phosphate-binding positions include Tyr-72, 108-109, Tyr-132, Asn-187, Tyr-218, and 246-248; these read SK and SFS. Residues Lys-109, Tyr-132, and Asn-187 each contribute to the substrate site. An N6-(pyridoxal phosphate)lysine modification is found at Lys-249. The pyridoxal 5'-phosphate site is built by Arg-257 and Asn-292. The substrate site is built by Asn-292 and Arg-388.

This sequence belongs to the class-I pyridoxal-phosphate-dependent aminotransferase family. LL-diaminopimelate aminotransferase subfamily. As to quaternary structure, homodimer. Requires pyridoxal 5'-phosphate as cofactor.

The catalysed reaction is (2S,6S)-2,6-diaminopimelate + 2-oxoglutarate = (S)-2,3,4,5-tetrahydrodipicolinate + L-glutamate + H2O + H(+). Its pathway is amino-acid biosynthesis; L-lysine biosynthesis via DAP pathway; LL-2,6-diaminopimelate from (S)-tetrahydrodipicolinate (aminotransferase route): step 1/1. Functionally, involved in the synthesis of meso-diaminopimelate (m-DAP or DL-DAP), required for both lysine and peptidoglycan biosynthesis. Catalyzes the direct conversion of tetrahydrodipicolinate to LL-diaminopimelate. This is LL-diaminopimelate aminotransferase from Prochlorococcus marinus (strain SARG / CCMP1375 / SS120).